We begin with the raw amino-acid sequence, 240 residues long: Ribonuclease HII (240 aa).

The 200-residue stretch at 27 to 226 folds into the RNase H type-2 domain; the sequence is GPVAGVDEAG…REARSLRLED (200 aa). Residues Asp-33, Glu-34, and Asp-127 each coordinate a divalent metal cation.

The protein belongs to the RNase HII family. Mn(2+) serves as cofactor. It depends on Mg(2+) as a cofactor.

It is found in the cytoplasm. The catalysed reaction is Endonucleolytic cleavage to 5'-phosphomonoester.. Endonuclease that specifically degrades the RNA of RNA-DNA hybrids. The chain is Ribonuclease HII from Frankia casuarinae (strain DSM 45818 / CECT 9043 / HFP020203 / CcI3).